The chain runs to 292 residues: 2-(5''-triphosphoribosyl)-3'-dephosphocoenzyme-A synthase (292 aa).

Belongs to the CitG/MdcB family.

The enzyme catalyses 3'-dephospho-CoA + ATP = 2'-(5''-triphospho-alpha-D-ribosyl)-3'-dephospho-CoA + adenine. In terms of biological role, catalyzes the formation of 2-(5''-triphosphoribosyl)-3'-dephosphocoenzyme-A, the precursor of the prosthetic group of the holo-acyl carrier protein (gamma chain) of citrate lyase, from ATP and dephospho-CoA. This Escherichia coli (strain ATCC 8739 / DSM 1576 / NBRC 3972 / NCIMB 8545 / WDCM 00012 / Crooks) protein is 2-(5''-triphosphoribosyl)-3'-dephosphocoenzyme-A synthase.